A 387-amino-acid polypeptide reads, in one-letter code: Gamma-butyrobetaine dioxygenase (387 aa).

4 residues coordinate Zn(2+): C38, C40, C43, and H82. Fe cation-binding residues include H202, D204, and H347. At S351 the chain carries Phosphoserine.

Belongs to the gamma-BBH/TMLD family. It depends on Fe(2+) as a cofactor. Requires L-ascorbate as cofactor.

The protein resides in the cytoplasm. It carries out the reaction 4-(trimethylamino)butanoate + 2-oxoglutarate + O2 = carnitine + succinate + CO2. The protein operates within amine and polyamine biosynthesis; carnitine biosynthesis. In terms of biological role, catalyzes the formation of L-carnitine from gamma-butyrobetaine. This Pongo abelii (Sumatran orangutan) protein is Gamma-butyrobetaine dioxygenase (BBOX1).